The following is a 284-amino-acid chain: Bifunctional protein FolD (284 aa).

Residues 166–168 and I232 each bind NADP(+); that span reads GAS.

This sequence belongs to the tetrahydrofolate dehydrogenase/cyclohydrolase family. Homodimer.

It carries out the reaction (6R)-5,10-methylene-5,6,7,8-tetrahydrofolate + NADP(+) = (6R)-5,10-methenyltetrahydrofolate + NADPH. The enzyme catalyses (6R)-5,10-methenyltetrahydrofolate + H2O = (6R)-10-formyltetrahydrofolate + H(+). It functions in the pathway one-carbon metabolism; tetrahydrofolate interconversion. Functionally, catalyzes the oxidation of 5,10-methylenetetrahydrofolate to 5,10-methenyltetrahydrofolate and then the hydrolysis of 5,10-methenyltetrahydrofolate to 10-formyltetrahydrofolate. The sequence is that of Bifunctional protein FolD from Pseudomonas paraeruginosa (strain DSM 24068 / PA7) (Pseudomonas aeruginosa (strain PA7)).